The primary structure comprises 258 residues: Alpha-fibrinogenase albofibrase (258 aa).

An N-terminal signal peptide occupies residues 1 to 18 (MVLIRVLANLLILQLSYA). The propeptide occupies 19 to 24 (QKSSEL). Residues 25–249 (VVGGDECNIN…YNDWIQSIIA (225 aa)) enclose the Peptidase S1 domain. 6 cysteine pairs are disulfide-bonded: cysteine 31–cysteine 163, cysteine 50–cysteine 66, cysteine 98–cysteine 256, cysteine 142–cysteine 210, cysteine 174–cysteine 189, and cysteine 200–cysteine 225. An N-linked (GlcNAc...) asparagine glycan is attached at asparagine 44. Catalysis depends on charge relay system residues histidine 65 and aspartate 110. Catalysis depends on serine 204, which acts as the Charge relay system.

Belongs to the peptidase S1 family. Snake venom subfamily. In terms of assembly, monomer. In terms of tissue distribution, expressed by the venom gland.

The protein resides in the secreted. Its function is as follows. The recombinant protein has fibrinogenolytic activity against the Aalpha chain (FGA) of fibrinogen. Activates plasminogen (PLG) (is 4-fold less active than urokinase). Has weak thrombin-like enzyme activity. Has enzymatic activity against a trypsin-like substrate (S-3013) and shows a weaker activity on an activated protein C substrate (S-3125). The polypeptide is Alpha-fibrinogenase albofibrase (Trimeresurus albolabris (White-lipped pit viper)).